Consider the following 1312-residue polypeptide: MSAIYKLSIQGIRSFDSNDRETIEFGKPLTLIVGMNGSGKTTIIECLKYATTGDLPPNSKGGVFIHDPKITGEKDIRAQVKLAFTSANGLNMIVTRNIQLLMKKTTTTFKTLEGQLVAINNSGDRSTLSTRSLELDAQVPLYLGVPKAILEYVIFCHQEDSLWPLSEPSNLKKKFDEIFQAMKFTKALDNLKSIKKDMSVDIKLLKQSVEHLKLDKDRSKAMKLNIHQLQTKIDQYNEEVSEIESQLNEITEKSDKLFKSNQDFQKILSKVENLKNTKLSISDQVKRLSNSIDILDLSKPDLQNLLANFSKVLMDKNNQLRDLETDISSLKDRQSSLQSLSNSLIRRQGELEAGKETYEKNRNHLSSLKEAFQHKFQGLSNIENSDMAQVNHEMSQFKAFISQDLTDTIDQFAKDIQLKETNLSDLIKSITVDSQNLEYNKKDRSKLIHDSEELAEKLKSFKSLSTQDSLNHELENLKTYKEKLQSWESENIIPKLNQKIEEKNNEMIILENQIEKFQDRIMKTNQQADLYAKLGLIKKSINTKLDELQKITEKLQNDSRIRQVFPLTQEFQRADLEMDFQKLFINMQKNIAINNKKMHELDRRYTNALYNLNTIEKDLQDNQKSKEKVIQLLSENLPEDCTIDEYNDVLEETELSYKTALENLKMHQTTLEFNRKALEIAERDSCCYLCSRKFENESFKSKLLQELKTKTDANFEKTLKDTVQNEKEYLHSLRLLEKHIITLNSINEKIDNSQKCLEKAKEETKTSKSKLDELEVDSTKLKDEKELAESEIRPLIEKFTYLEKELKDLENSSKTISEELSIYNTSEDGIQTVDELRDQQRKMNDSLRELRKTISDLQMEKDEKVRENSRMINLIKEKELTVSEIESSLTQKQNIDDSIRSKRENINDIDSRVKELEARIISLKNKKDEAQSVLDKVKNERDIQVRNKQKTVADINRLIDRFQTIYNEVVDFEAKGFDELQTTIKELELNKAQMLELKEQLDLKSNEVNEEKRKLADSNNEEKNLKQNLELIELKSQLQHIESEISRLDVQNAEAERDKYQEESLRLRTRFEKLSSENAGKLGEMKQLQNQIDSLTHQLRTDYKDIEKNYHKEWVELQTRSFVTDDIDVYSKALDSAIMKYHGLKMQDINRIIDELWKRTYSGTDIDTIKIRSDEVSSTVKGKSYNYRVVMYKQDVELDMRGRCSAGQKVLASIIIRLALSETFGANCGVIALDEPTTNLDEENIESLAKSLHNIINMRRHQKNFQLIVITHDEKFLGHMNAAAFTDHFFKVKRDDRQKSQIEWVDINRVTY.

ATP-binding residues include arginine 13, asparagine 36, glycine 37, glycine 39, lysine 40, threonine 41, threonine 42, isoleucine 65, aspartate 67, and glutamine 158. Threonine 41 contributes to the Mg(2+) binding site. Residue glutamine 158 participates in Mg(2+) binding. 2 coiled-coil regions span residues 185-347 and 403-558; these read TKAL…LIRR and QDLT…LQND. Serine 469 carries the phosphoserine modification. Threonine 568 bears the Phosphothreonine mark. The stretch at 640 to 678 forms a coiled coil; sequence DCTIDEYNDVLEETELSYKTALENLKMHQTTLEFNRKAL. Residues 640–741 enclose the Zinc-hook domain; that stretch reads DCTIDEYNDV…SLRLLEKHII (102 aa). Zn(2+) contacts are provided by cysteine 687 and cysteine 690. Coiled coils occupy residues 712–741 and 787–1108; these read DANF…KHII and LAES…DIEK.

It belongs to the SMC family. RAD50 subfamily. As to quaternary structure, component of the MRN complex composed of two heterodimers RAD50 and MRE11 associated with a single XRS2. The MRN complexes dimerize on DNA to form joined MRN-MRN oligomers required for DNA double-strand break repair. It depends on Zn(2+) as a cofactor.

The protein localises to the nucleus. The protein resides in the chromosome. The enzyme catalyses ATP + H2O = ADP + phosphate + H(+). Its function is as follows. Component of the MRN complex, which plays a central role in double-strand break (DSB) repair, DNA recombination, maintenance of telomere integrity and meiosis. The MRN complex is involved in the repair of DNA double-strand breaks (DSBs) via homologous recombination (HR), an error-free mechanism which primarily occurs during S and G2 phases. The complex (1) mediates the end resection of damaged DNA, which generates proper single-stranded DNA, a key initial steps in HR, and is (2) required for the recruitment of other repair factors and efficient activation of TEL1/ATM and ATR upon DNA damage. The MRN complex possesses single-strand endonuclease activity and double-strand-specific 3'-5' exonuclease activity, which are provided by MRE11, to initiate end resection, which is required for single-strand invasion and recombination. Within the complex, RAD50 is both required to bind DNA ends and hold them in close proximity and regulate the activity of MRE11. RAD50 provides an ATP-dependent control of MRE11 by positioning DNA ends into the MRE11 active site: ATP-binding induces a large structural change from an open form with accessible MRE11 nuclease sites into a closed form. The MRN complex is also required for the processing of R-loops. The sequence is that of DNA repair protein RAD50 from Saccharomyces cerevisiae (strain ATCC 204508 / S288c) (Baker's yeast).